Reading from the N-terminus, the 733-residue chain is Nuclear hormone receptor family member nhr-66 (733 aa).

Composition is skewed to low complexity over residues Pro-113–Ser-130 and Gln-165–Asn-185. Residues Pro-113–Lys-190 form a disordered region. The segment at residues Val-266–His-343 is a DNA-binding region (nuclear receptor). NR C4-type zinc fingers lie at residues Cys-269 to Cys-289 and Cys-305 to Cys-326. Residues Pro-361–Gly-396 are disordered. Over residues Val-371–Gly-382 the composition is skewed to low complexity. The NR LBD domain occupies Cys-444–Glu-687. An AF-2 region spans residues Ala-676–Glu-687. Residues Val-691–Leu-733 form a disordered region.

The protein belongs to the nuclear hormone receptor family. In terms of assembly, interacts with nuclear hormone receptor nhr-49; the interaction is direct. As to expression, widely expressed, including in hypodermis, gut, muscle, and neuronal cells of the ventral nerve cord, head, and tail ganglia. Expressed in the head ganglion in several sensory and interneurons, including AVA.

It is found in the nucleus. Transcription factor. Binds to regulatory elements and regulates transcription of target genes, including the potassium channel accessory subunit mps-2. Negatively regulates transcription of mps-2, thereby modulating age-dependent memory decline. In concert with nuclear hormone receptor nhr-49, involved in regulating target genes with roles in sphingolipid breakdown and lipid remodeling. Plays a role in modulating mitochondrial morphology and function. This chain is Nuclear hormone receptor family member nhr-66, found in Caenorhabditis elegans.